The following is a 359-amino-acid chain: Double-stranded RNA-binding protein 3 (359 aa).

DRBM domains are found at residues 1-70 and 87-155; these read MYKN…ALSS and IYKN…SLRK. The segment covering 266 to 280 has biased composition (basic and acidic residues); that stretch reads EKKQSLDDPKPEMRI. Disordered stretches follow at residues 266–292 and 328–359; these read EKKQSLDDPKPEMRIKTSSPSPLSSSV and APPPKPNPNPNSSPFITRELGNGSQEKKSLPN. Pro residues predominate over residues 328–338; it reads APPPKPNPNPN.

Its function is as follows. Binds double-stranded RNA. This chain is Double-stranded RNA-binding protein 3 (DRB3), found in Arabidopsis thaliana (Mouse-ear cress).